Consider the following 288-residue polypeptide: Eukaryotic translation initiation factor 3 subunit G (288 aa).

Residues 1-35 form a disordered region; sequence MSRVANNRDWADDEDLEDSNELPQSTTTTNKDGTQ. The span at 11 to 20 shows a compositional bias: acidic residues; it reads ADDEDLEDSN. Polar residues predominate over residues 21–35; it reads ELPQSTTTTNKDGTQ. Positions 208–286 constitute an RRM domain; the sequence is ATLRVTNVSE…LILRVEFAKK (79 aa).

The protein belongs to the eIF-3 subunit G family. In terms of assembly, component of the eukaryotic translation initiation factor 3 (eIF-3) complex.

Its subcellular location is the cytoplasm. RNA-binding component of the eukaryotic translation initiation factor 3 (eIF-3) complex, which is involved in protein synthesis of a specialized repertoire of mRNAs and, together with other initiation factors, stimulates binding of mRNA and methionyl-tRNAi to the 40S ribosome. The eIF-3 complex specifically targets and initiates translation of a subset of mRNAs involved in cell proliferation. This subunit can bind 18S rRNA. In Botryotinia fuckeliana (strain B05.10) (Noble rot fungus), this protein is Eukaryotic translation initiation factor 3 subunit G (tif35).